The following is a 104-amino-acid chain: UPF0145 protein DET1617 (104 aa).

It belongs to the UPF0145 family.

The polypeptide is UPF0145 protein DET1617 (Dehalococcoides mccartyi (strain ATCC BAA-2266 / KCTC 15142 / 195) (Dehalococcoides ethenogenes (strain 195))).